We begin with the raw amino-acid sequence, 116 residues long: Vesicle-associated membrane protein 2 (116 aa).

The segment at 1–33 is disordered; sequence MSATAATAPPAAPAGEGGPPAPPPNLTSNRRLQ. Ser2 carries the N-acetylserine modification. The Cytoplasmic portion of the chain corresponds to 2-94; that stretch reads SATAATAPPA…KRKYWWKNLK (93 aa). The region spanning 31 to 91 is the v-SNARE coiled-coil homology domain; that stretch reads RLQQTQAQVD…AKLKRKYWWK (61 aa). Residues 92 to 116 are required for interaction with SEPT8; the sequence is NLKMMIILGVICAIILIIIIVYFST. A helical; Anchor for type IV membrane protein membrane pass occupies residues 95–114; that stretch reads MMIILGVICAIILIIIIVYF. Residues 115–116 are Vesicular-facing; sequence ST.

The protein belongs to the synaptobrevin family. Part of the SNARE core complex containing SNAP25, VAMP2 and STX1A; this complex constitutes the basic catalytic machinery of the complex neurotransmitter release apparatus. Recruited to the SNARE complex following binding of the SNARE complex component STX1A to STXBP1. This complex binds to CPLX1. Interacts with POPDC1 and STX4. Interacts with VAPA and VAPB. Interacts with WDFY2, PRKCZ and PRKCI. Forms a complex with WDFY2 and PRKCZ. Interacts (via N-terminus) with KCNB1 (via N-terminus and C-terminus); stimulates the channel inactivation rate of KCNB1. Interacts with SEPT8; the interaction inhibits interaction of VAMP2 with SYP. Interacts with SYP; the interaction is inhibited by interaction with SEPT8. Interacts with PICALM. Interacts with alpha-synuclein/SNCA. Interacts with STX3. Phosphorylated by PRKCZ in vitro and this phosphorylation is increased in the presence of WDFY2. Post-translationally, (Microbial infection) Targeted and hydrolyzed by C.botulinum neurotoxin type B (BoNT/B, botB) which hydrolyzes the 76-Gln-|-Phe-77 bond and probably inhibits neurotransmitter release. In terms of processing, (Microbial infection) Targeted and hydrolyzed by C.botulinum neurotoxin type D (BoNT/D, botD) which probably hydrolyzes the 59-Lys-|-Leu-60 bond and inhibits neurotransmitter release. Note that humans are not known to be infected by C.botulinum type D. (Microbial infection) Targeted and hydrolyzed by C.botulinum neurotoxin type F (BoNT/F, botF) which hydrolyzes the 58-Gln-|-Lys-59 bond and probably inhibits neurotransmitter release. Post-translationally, (Microbial infection) Targeted and hydrolyzed by C.tetani tetanus toxin (tetX) which hydrolyzes the 76-Gln-|-Phe-77 bond and probably inhibits neurotransmitter release. In terms of tissue distribution, nervous system and skeletal muscle.

Its subcellular location is the cytoplasmic vesicle. The protein resides in the secretory vesicle. The protein localises to the synaptic vesicle membrane. It localises to the cell membrane. Involved in the targeting and/or fusion of transport vesicles to their target membrane. Major SNARE protein of synaptic vesicles which mediates fusion of synaptic vesicles to release neurotransmitters. Essential for fast vesicular exocytosis and activity-dependent neurotransmitter release as well as fast endocytosis that mediates rapid reuse of synaptic vesicles. Modulates the gating characteristics of the delayed rectifier voltage-dependent potassium channel KCNB1. This Homo sapiens (Human) protein is Vesicle-associated membrane protein 2.